The chain runs to 100 residues: Urease subunit gamma (100 aa).

Belongs to the urease gamma subunit family. As to quaternary structure, heterotrimer of UreA (gamma), UreB (beta) and UreC (alpha) subunits. Three heterotrimers associate to form the active enzyme.

It localises to the cytoplasm. The enzyme catalyses urea + 2 H2O + H(+) = hydrogencarbonate + 2 NH4(+). The protein operates within nitrogen metabolism; urea degradation; CO(2) and NH(3) from urea (urease route): step 1/1. The chain is Urease subunit gamma from Nitrosospira multiformis (strain ATCC 25196 / NCIMB 11849 / C 71).